A 434-amino-acid chain; its full sequence is Protein FAM83A (434 aa).

The tract at residues 1–298 (MSRSRHLGKI…LYASSKPVMG (298 aa)) is DUF1669. The interval 76–97 (REPPCPPDTLGGAEAGPKGLDS) is disordered. A phosphoserine mark is found at S301, S327, S348, and S357. The disordered stretch occupies residues 308 to 399 (VPPGAAPANG…HDGPPAAVYS (92 aa)). 2 stretches are compositionally biased toward low complexity: residues 320-332 (SSSS…RTSS) and 348-357 (SVSASSGPCS). The segment covering 358–369 (PAAPHPPPPPRF) has biased composition (pro residues).

The protein belongs to the FAM83 family. As to quaternary structure, directly interacts (via DUF1669) with casein kinase isoforms CSNK1A1, CSNK1A1L, CSNK1D and CSNK1E. Post-translationally, phosphorylated upon EGFR activation in a breast cancer cell line.

It localises to the cytoplasm. In terms of biological role, involved in mitochondrial maintenance during adipogenesis. May be acting by playing a role in the maintenance of normal mitochondrial function. In Homo sapiens (Human), this protein is Protein FAM83A.